The chain runs to 70 residues: DNA-directed RNA polymerase subunit omega (70 aa).

It belongs to the RNA polymerase subunit omega family. The RNAP catalytic core consists of 2 alpha, 1 beta, 1 beta' and 1 omega subunit. When a sigma factor is associated with the core the holoenzyme is formed, which can initiate transcription.

The catalysed reaction is RNA(n) + a ribonucleoside 5'-triphosphate = RNA(n+1) + diphosphate. Functionally, promotes RNA polymerase assembly. Latches the N- and C-terminal regions of the beta' subunit thereby facilitating its interaction with the beta and alpha subunits. The sequence is that of DNA-directed RNA polymerase subunit omega from Bacillus mycoides (strain KBAB4) (Bacillus weihenstephanensis).